The chain runs to 171 residues: Large ribosomal subunit protein uL10 (171 aa).

This sequence belongs to the universal ribosomal protein uL10 family. As to quaternary structure, part of the ribosomal stalk of the 50S ribosomal subunit. The N-terminus interacts with L11 and the large rRNA to form the base of the stalk. The C-terminus forms an elongated spine to which L12 dimers bind in a sequential fashion forming a multimeric L10(L12)X complex.

In terms of biological role, forms part of the ribosomal stalk, playing a central role in the interaction of the ribosome with GTP-bound translation factors. The sequence is that of Large ribosomal subunit protein uL10 from Nitrosomonas europaea (strain ATCC 19718 / CIP 103999 / KCTC 2705 / NBRC 14298).